The following is a 31-amino-acid chain: Cyclotide mden-J (31 aa).

A cross-link (cyclopeptide (Gly-Asn)) is located at residues 1–31 (GSIPCGESCVYIPCISSIVGCACKSKVCYKN). 3 disulfides stabilise this stretch: C5/C21, C9/C23, and C14/C28.

It belongs to the cyclotide family. Bracelet subfamily. This is a cyclic peptide.

Functionally, probably participates in a plant defense mechanism. This Melicytus dentatus (Tree violet) protein is Cyclotide mden-J.